We begin with the raw amino-acid sequence, 273 residues long: Ribosomal RNA small subunit methyltransferase A (273 aa).

S-adenosyl-L-methionine-binding residues include N18, L20, G45, E66, D91, and N113.

This sequence belongs to the class I-like SAM-binding methyltransferase superfamily. rRNA adenine N(6)-methyltransferase family. RsmA subfamily.

Its subcellular location is the cytoplasm. It carries out the reaction adenosine(1518)/adenosine(1519) in 16S rRNA + 4 S-adenosyl-L-methionine = N(6)-dimethyladenosine(1518)/N(6)-dimethyladenosine(1519) in 16S rRNA + 4 S-adenosyl-L-homocysteine + 4 H(+). Specifically dimethylates two adjacent adenosines (A1518 and A1519) in the loop of a conserved hairpin near the 3'-end of 16S rRNA in the 30S particle. May play a critical role in biogenesis of 30S subunits. The chain is Ribosomal RNA small subunit methyltransferase A from Salmonella schwarzengrund (strain CVM19633).